The sequence spans 324 residues: Protoheme IX farnesyltransferase (324 aa).

9 consecutive transmembrane segments (helical) span residues Leu31–Val51, Pro53–Ile73, Leu104–Leu124, Leu125–Leu145, Ile153–Gly173, Val181–Ile201, Thr222–Tyr242, Pro243–Ile263, and Phe285–Thr305.

This sequence belongs to the UbiA prenyltransferase family. Protoheme IX farnesyltransferase subfamily.

The protein resides in the cell inner membrane. It carries out the reaction heme b + (2E,6E)-farnesyl diphosphate + H2O = Fe(II)-heme o + diphosphate. It participates in porphyrin-containing compound metabolism; heme O biosynthesis; heme O from protoheme: step 1/1. Functionally, converts heme B (protoheme IX) to heme O by substitution of the vinyl group on carbon 2 of heme B porphyrin ring with a hydroxyethyl farnesyl side group. This Cyanothece sp. (strain PCC 7425 / ATCC 29141) protein is Protoheme IX farnesyltransferase.